Consider the following 42-residue polypeptide: Photosystem I reaction center subunit IX (42 aa).

A helical membrane pass occupies residues 7–27 (YLSTAPVLATIWFIILAGLLI).

This sequence belongs to the PsaJ family.

It is found in the plastid. The protein localises to the chloroplast thylakoid membrane. Functionally, may help in the organization of the PsaE and PsaF subunits. This Mesostigma viride (Green alga) protein is Photosystem I reaction center subunit IX.